The sequence spans 209 residues: tRNA (guanine-N(7)-)-methyltransferase (209 aa).

The S-adenosyl-L-methionine site is built by Glu-40, Glu-65, and Asp-114. The active site involves Asp-114. Residues Asp-150 and 188–191 each bind substrate; that span reads TAFE.

This sequence belongs to the class I-like SAM-binding methyltransferase superfamily. TrmB family.

The catalysed reaction is guanosine(46) in tRNA + S-adenosyl-L-methionine = N(7)-methylguanosine(46) in tRNA + S-adenosyl-L-homocysteine. Its pathway is tRNA modification; N(7)-methylguanine-tRNA biosynthesis. Functionally, catalyzes the formation of N(7)-methylguanine at position 46 (m7G46) in tRNA. This Bdellovibrio bacteriovorus (strain ATCC 15356 / DSM 50701 / NCIMB 9529 / HD100) protein is tRNA (guanine-N(7)-)-methyltransferase.